We begin with the raw amino-acid sequence, 391 residues long: 3-ketoacyl-CoA thiolase (391 aa).

Cys-95 acts as the Acyl-thioester intermediate in catalysis. Residues His-347 and Cys-377 each act as proton acceptor in the active site.

The protein belongs to the thiolase-like superfamily. Thiolase family. In terms of assembly, heterotetramer of two alpha chains (FadB) and two beta chains (FadA).

The protein resides in the cytoplasm. The catalysed reaction is an acyl-CoA + acetyl-CoA = a 3-oxoacyl-CoA + CoA. It functions in the pathway lipid metabolism; fatty acid beta-oxidation. Its function is as follows. Catalyzes the final step of fatty acid oxidation in which acetyl-CoA is released and the CoA ester of a fatty acid two carbons shorter is formed. This Pseudomonas fluorescens (strain Pf0-1) protein is 3-ketoacyl-CoA thiolase.